The chain runs to 597 residues: Elongation factor 4 (597 aa).

Residues 2–184 (DHIRNFSIIA…SLIAKVPPPK (183 aa)) form the tr-type G domain. Residues 14–19 (DHGKST) and 131–134 (NKID) contribute to the GTP site.

The protein belongs to the TRAFAC class translation factor GTPase superfamily. Classic translation factor GTPase family. LepA subfamily.

The protein localises to the cell inner membrane. It catalyses the reaction GTP + H2O = GDP + phosphate + H(+). In terms of biological role, required for accurate and efficient protein synthesis under certain stress conditions. May act as a fidelity factor of the translation reaction, by catalyzing a one-codon backward translocation of tRNAs on improperly translocated ribosomes. Back-translocation proceeds from a post-translocation (POST) complex to a pre-translocation (PRE) complex, thus giving elongation factor G a second chance to translocate the tRNAs correctly. Binds to ribosomes in a GTP-dependent manner. The chain is Elongation factor 4 from Burkholderia cenocepacia (strain HI2424).